A 692-amino-acid chain; its full sequence is Elongation factor G 2 (692 aa).

The region spanning 8 to 283 (EKTRNIGIMA…SVVAYLPSPL (276 aa)) is the tr-type G domain. GTP-binding positions include 17 to 24 (AHIDAGKT), 81 to 85 (DTPGH), and 135 to 138 (NKMD).

The protein belongs to the TRAFAC class translation factor GTPase superfamily. Classic translation factor GTPase family. EF-G/EF-2 subfamily.

The protein localises to the cytoplasm. Functionally, catalyzes the GTP-dependent ribosomal translocation step during translation elongation. During this step, the ribosome changes from the pre-translocational (PRE) to the post-translocational (POST) state as the newly formed A-site-bound peptidyl-tRNA and P-site-bound deacylated tRNA move to the P and E sites, respectively. Catalyzes the coordinated movement of the two tRNA molecules, the mRNA and conformational changes in the ribosome. The sequence is that of Elongation factor G 2 from Geobacter sulfurreducens (strain ATCC 51573 / DSM 12127 / PCA).